Reading from the N-terminus, the 284-residue chain is Pantothenate synthetase (284 aa).

An ATP-binding site is contributed by 30–37; that stretch reads MGNLHDGH. The Proton donor role is filled by H37. Q61 is a binding site for (R)-pantoate. Q61 provides a ligand contact to beta-alanine. An ATP-binding site is contributed by 149-152; sequence GEKD. Residue Q155 coordinates (R)-pantoate. ATP-binding positions include I178 and 186 to 189; that span reads LSSR.

Belongs to the pantothenate synthetase family. Homodimer.

It is found in the cytoplasm. It carries out the reaction (R)-pantoate + beta-alanine + ATP = (R)-pantothenate + AMP + diphosphate + H(+). It participates in cofactor biosynthesis; (R)-pantothenate biosynthesis; (R)-pantothenate from (R)-pantoate and beta-alanine: step 1/1. In terms of biological role, catalyzes the condensation of pantoate with beta-alanine in an ATP-dependent reaction via a pantoyl-adenylate intermediate. In Salmonella paratyphi A (strain ATCC 9150 / SARB42), this protein is Pantothenate synthetase.